The chain runs to 479 residues: Zinc metalloproteinase/disintegrin (479 aa).

An N-terminal signal peptide occupies residues 1–20 (MIQVLLVTICLAAFPYQGSS). Positions 21–187 (IILESGKVND…PIKKASQLIV (167 aa)) are excised as a propeptide. Residues 193 to 390 (RYMEIVIVVD…ENPPCILNKP (198 aa)) enclose the Peptidase M12B domain. The Ca(2+) site is built by glutamate 196 and aspartate 280. 3 cysteine pairs are disulfide-bonded: cysteine 304–cysteine 385, cysteine 344–cysteine 369, and cysteine 346–cysteine 352. Histidine 329 is a Zn(2+) binding site. Residue glutamate 330 is part of the active site. Residues histidine 333 and histidine 339 each contribute to the Zn(2+) site. Ca(2+) is bound by residues cysteine 385 and asparagine 388. Positions 390–414 (PLRTDTVSTPVSGNELLEAGKDYDR) are excised as a propeptide. Residues 398–479 (TPVSGNELLE…ADCPRNPYHA (82 aa)) form the Disintegrin domain. 3 disulfide bridges follow: cysteine 435–cysteine 441, cysteine 440–cysteine 465, and cysteine 453–cysteine 472. Positions 457–459 (RGD) match the Cell attachment site motif.

This sequence belongs to the venom metalloproteinase (M12B) family. P-II subfamily. P-IIa sub-subfamily. In terms of assembly, monomer. The cofactor is Zn(2+). As to expression, expressed by the venom gland.

Its subcellular location is the secreted. Snake venom metalloproteinase that impairs hemostasis in the envenomed animal. Functionally, inhibits platelet aggregation induced by ADP, thrombin, platelet-activating factor and collagen. Acts by inhibiting fibrinogen interaction with platelet receptors GPIIb/GPIIIa (ITGA2B/ITGB3). This Deinagkistrodon acutus (Hundred-pace snake) protein is Zinc metalloproteinase/disintegrin.